A 545-amino-acid chain; its full sequence is Serine/threonine-protein kinase PAK 1 (545 aa).

Residues 1 to 77 (MSNNGLDIQD…KEKERPEISL (77 aa)) are disordered. Residue S2 is modified to N-acetylserine. S21 is modified (phosphoserine; by PKB and autocatalysis). The residue at position 57 (S57) is a Phosphoserine; by autocatalysis. Residues 68–77 (KEKERPEISL) are compositionally biased toward basic and acidic residues. Residues 70–140 (KERPEISLPS…YNSKKTSNSQ (71 aa)) form an autoregulatory region region. Positions 75-88 (ISLPSDFEHTIHVG) constitute a CRIB domain. The GTPase-binding stretch occupies residues 75 to 105 (ISLPSDFEHTIHVGFDAVTGEFTGMPEQWAR). T84 is subject to Phosphothreonine; by OXSR1. S115 carries the post-translational modification Phosphoserine. Phosphotyrosine occurs at positions 131 and 142. Residue S144 is modified to Phosphoserine; by autocatalysis. A Phosphoserine modification is found at S149. The residue at position 153 (Y153) is a Phosphotyrosine; by JAK2. Residues 159-198 (LNVKAVSETPAVPPVSEDEDDDDDDATPPPVIAPRPEHTK) are disordered. A Phosphoserine modification is found at S174. Over residues 174 to 184 (SEDEDDDDDDA) the composition is skewed to acidic residues. The residue at position 185 (T185) is a Phosphothreonine. Phosphoserine; by autocatalysis is present on S199. Y201 bears the Phosphotyrosine; by JAK2 mark. S204 is modified (phosphoserine). Residues 211–251 (VTPTRDVATSPISPTENNTTPPDALTRNTEKQKKKPKMSDE) are disordered. Phosphothreonine is present on residues T212 and T219. S220 and S223 each carry phosphoserine. Residues 220–231 (SPISPTENNTTP) are compositionally biased toward polar residues. Phosphothreonine occurs at positions 225, 229, and 230. In terms of domain architecture, Protein kinase spans 270-521 (YTRFEKIGQG…AKELLQHQFL (252 aa)). 276-284 (IGQGASGTV) provides a ligand contact to ATP. The residue at position 285 (Y285) is a Phosphotyrosine; by JAK2. Residues K299 and 345–347 (EYL) each bind ATP. The active-site Proton acceptor is D389. T423 carries the post-translational modification Phosphothreonine; by autocatalysis, BRSK2 and PDPK1.

Belongs to the protein kinase superfamily. STE Ser/Thr protein kinase family. STE20 subfamily. Homodimer; homodimerization results in autoinhibition. Active as monomer. Interacts with GIT1. Component of cytoplasmic complexes, which also contains PXN, ARHGEF7 and GIT1. Interacts with NISCH. Interacts with DVL1; mediates the formation of a DVL1, MUSK and PAK1 ternary complex involved in AChR clustering. Binds to the caspase-cleaved p110 isoform of CDC2L1 and CDC2L2, p110C, but not the full-length proteins. Interacts with ARHGEF7. Interacts tightly with GTP-bound but not GDP-bound CDC42/P21 and RAC1. Interacts with SCRIB. Interacts with PDPK1. Interacts (via kinase domain) with RAF1. Interacts with NCK1 and NCK2. Interacts with TBCB. Interacts with BRSK2. Interacts with SNAI1. Interacts with CIB1 isoform 2. Interacts with CIB1 (via N-terminal region); the interaction is direct, promotes PAK1 activity and occurs in a calcium-dependent manner. Interacts with INPP5K. Interacts with gamma-tubulin. Interacts with RHOU; the interaction promotes PAK1 activation. It depends on Mg(2+) as a cofactor. Autophosphorylated in trans, meaning that in a dimer, one kinase molecule phosphorylates the other one. Activated by autophosphorylation at Thr-423 in response to a conformation change, triggered by interaction with GTP-bound CDC42 or RAC1. Activated by phosphorylation at Thr-423 by BRSK2 and by PDPK1. Phosphorylated by JAK2 in response to PRL; this increases PAK1 kinase activity. Phosphorylated at Ser-21 by PKB/AKT; this reduces interaction with NCK1 and association with focal adhesion sites. Upon DNA damage, phosphorylated at Thr-212 and translocates to the nucleoplasm. Phosphorylated at tyrosine residues, which can be enhanced by NTN1. In terms of tissue distribution, overexpressed in gastric cancer cells and tissues (at protein level).

It is found in the cytoplasm. Its subcellular location is the cell junction. The protein resides in the focal adhesion. The protein localises to the cell projection. It localises to the lamellipodium. It is found in the cell membrane. Its subcellular location is the ruffle membrane. The protein resides in the invadopodium. The protein localises to the nucleus. It localises to the nucleoplasm. It is found in the chromosome. Its subcellular location is the cytoskeleton. The protein resides in the microtubule organizing center. The protein localises to the centrosome. It catalyses the reaction L-seryl-[protein] + ATP = O-phospho-L-seryl-[protein] + ADP + H(+). It carries out the reaction L-threonyl-[protein] + ATP = O-phospho-L-threonyl-[protein] + ADP + H(+). With respect to regulation, activated by binding small G proteins. Binding of GTP-bound CDC42 or RAC1 to the autoregulatory region releases monomers from the autoinhibited dimer, and enables activation by phosphorylation of Thr-423. Phosphorylation of Thr-84 by OXSR1 inhibits activation. Functionally, protein kinase involved in intracellular signaling pathways downstream of integrins and receptor-type kinases that plays an important role in cytoskeleton dynamics, in cell adhesion, migration, proliferation, apoptosis, mitosis, and in vesicle-mediated transport processes. Can directly phosphorylate BAD and protects cells against apoptosis. Activated by interaction with CDC42 and RAC1. Functions as a GTPase effector that links the Rho-related GTPases CDC42 and RAC1 to the JNK MAP kinase pathway. Phosphorylates and activates MAP2K1, and thereby mediates activation of downstream MAP kinases. Involved in the reorganization of the actin cytoskeleton, actin stress fibers and of focal adhesion complexes. Phosphorylates the tubulin chaperone TBCB and thereby plays a role in the regulation of microtubule biogenesis and organization of the tubulin cytoskeleton. Plays a role in the regulation of insulin secretion in response to elevated glucose levels. Part of a ternary complex that contains PAK1, DVL1 and MUSK that is important for MUSK-dependent regulation of AChR clustering during the formation of the neuromuscular junction (NMJ). Activity is inhibited in cells undergoing apoptosis, potentially due to binding of CDC2L1 and CDC2L2. Phosphorylates MYL9/MLC2. Phosphorylates RAF1 at 'Ser-338' and 'Ser-339' resulting in: activation of RAF1, stimulation of RAF1 translocation to mitochondria, phosphorylation of BAD by RAF1, and RAF1 binding to BCL2. Phosphorylates SNAI1 at 'Ser-246' promoting its transcriptional repressor activity by increasing its accumulation in the nucleus. In podocytes, promotes NR3C2 nuclear localization. Required for atypical chemokine receptor ACKR2-induced phosphorylation of LIMK1 and cofilin (CFL1) and for the up-regulation of ACKR2 from endosomal compartment to cell membrane, increasing its efficiency in chemokine uptake and degradation. In synapses, seems to mediate the regulation of F-actin cluster formation performed by SHANK3, maybe through CFL1 phosphorylation and inactivation. Plays a role in RUFY3-mediated facilitating gastric cancer cells migration and invasion. In response to DNA damage, phosphorylates MORC2 which activates its ATPase activity and facilitates chromatin remodeling. In neurons, plays a crucial role in regulating GABA(A) receptor synaptic stability and hence GABAergic inhibitory synaptic transmission through its role in F-actin stabilization. In hippocampal neurons, necessary for the formation of dendritic spines and excitatory synapses; this function is dependent on kinase activity and may be exerted by the regulation of actomyosin contractility through the phosphorylation of myosin II regulatory light chain (MLC). Along with GIT1, positively regulates microtubule nucleation during interphase. Phosphorylates FXR1, promoting its localization to stress granules and activity. Phosphorylates ILK on 'Thr-173' and 'Ser-246', promoting nuclear export of ILK. This is Serine/threonine-protein kinase PAK 1 from Homo sapiens (Human).